We begin with the raw amino-acid sequence, 302 residues long: D-alanine--D-alanine ligase B (302 aa).

The region spanning 99-294 (KKVLKAENIR…YSKFIDLIIE (196 aa)) is the ATP-grasp domain. Residue 126–181 (IEEIGYPVFVKPNNGGSSVATFKVYKKEDIKNSVMEGLKYDEEVIIESFIKGREIT) participates in ATP binding. Mg(2+)-binding residues include D248, E261, and N263.

Belongs to the D-alanine--D-alanine ligase family. The cofactor is Mg(2+). Mn(2+) is required as a cofactor.

The protein localises to the cytoplasm. The catalysed reaction is 2 D-alanine + ATP = D-alanyl-D-alanine + ADP + phosphate + H(+). It participates in cell wall biogenesis; peptidoglycan biosynthesis. Cell wall formation. The sequence is that of D-alanine--D-alanine ligase B from Clostridium perfringens (strain 13 / Type A).